The chain runs to 218 residues: Non-structural protein NS3 (218 aa).

The protein belongs to the orbivirus NS3 family.

In terms of biological role, may play a role in the release of virions from infected cells. This chain is Non-structural protein NS3 (Segment-10), found in Camelus dromedarius (Dromedary).